The following is a 1120-amino-acid chain: Vacuolar cation-chloride cotransporter 1 (1120 aa).

The segment at Met-1 to Ser-21 is disordered. Residues Met-1–Lys-62 lie on the Cytoplasmic side of the membrane. Position 34 is a phosphoserine (Ser-34). The helical transmembrane segment at Leu-63–Phe-83 threads the bilayer. At Leu-84–Arg-85 the chain is on the vacuolar side. A helical membrane pass occupies residues Phe-86–Tyr-106. Residues Thr-107 to Ser-145 are Cytoplasmic-facing. Residues Ile-146–Ile-166 form a helical membrane-spanning segment. The Vacuolar portion of the chain corresponds to Glu-167–His-193. Residues Trp-194–Gly-214 traverse the membrane as a helical segment. The Cytoplasmic segment spans residues Ser-215 to Ala-221. A helical membrane pass occupies residues Gly-222 to Ile-242. The Vacuolar segment spans residues Arg-243 to Thr-283. A helical transmembrane segment spans residues Phe-284–Met-304. Topologically, residues Ser-305–Lys-317 are cytoplasmic. Residues Gly-318–Gly-338 form a helical membrane-spanning segment. Residues Cys-339–Gln-360 are Vacuolar-facing. The chain crosses the membrane as a helical span at residues Trp-361 to Gly-381. At Ala-382 to Asn-393 the chain is on the cytoplasmic side. A helical membrane pass occupies residues Ile-394–Ile-414. Over Leu-415–Phe-430 the chain is Vacuolar. A helical membrane pass occupies residues Ile-431–Ile-451. Over Ser-452–Lys-462 the chain is Cytoplasmic. A helical membrane pass occupies residues Tyr-463–Ile-482. The Vacuolar portion of the chain corresponds to Val-483 to Ser-487. The helical transmembrane segment at Ala-488–Ser-506 threads the bilayer. At Pro-507–Leu-1120 the chain is on the cytoplasmic side. 3 positions are modified to phosphoserine: Ser-654, Ser-915, and Ser-918.

This sequence belongs to the SLC12A transporter family.

The protein resides in the vacuole membrane. Functionally, catalyzes the coordinated symport of chloride with potassium ions across the vacuolar membrane. Involved in vacuolar osmoregulation. This Saccharomyces cerevisiae (strain ATCC 204508 / S288c) (Baker's yeast) protein is Vacuolar cation-chloride cotransporter 1.